A 202-amino-acid chain; its full sequence is LexA repressor (202 aa).

Catalysis depends on for autocatalytic cleavage activity residues Ser-123 and Lys-159.

This sequence belongs to the peptidase S24 family. Homodimer.

The catalysed reaction is Hydrolysis of Ala-|-Gly bond in repressor LexA.. In terms of biological role, binds the consensus sequence 5'-TGTTC-N(4)-GAACA-3'; some genes have a tandem consensus sequence, at high concentrations their binding is cooperative. Binds to the promoters of a number of genes, including dinB, imuA, lexA, recA, recQ, splB and uvrA. Represses a number of genes involved in the response to DNA damage (SOS response). In the presence of single-stranded DNA, RecA interacts with LexA causing an autocatalytic cleavage which disrupts the DNA-binding part of LexA, leading to derepression of the SOS regulon and eventually DNA repair. This is LexA repressor from Verrucomicrobium spinosum (strain ATCC 43997 / DSM 4136 / JCM 18804 / IFAM 1439).